The sequence spans 547 residues: Probable terpene synthase 3 (547 aa).

Positions 298, 302, and 451 each coordinate Mg(2+). The short motif at 298 to 302 is the DDXXD motif element; sequence DDIYD.

The protein belongs to the terpene synthase family. Mg(2+) is required as a cofactor.

Its function is as follows. Probable sesquiterpene synthase. This is Probable terpene synthase 3 (TPS3) from Ricinus communis (Castor bean).